Here is a 572-residue protein sequence, read N- to C-terminus: Proline--tRNA ligase (572 aa).

Belongs to the class-II aminoacyl-tRNA synthetase family. ProS type 1 subfamily. As to quaternary structure, homodimer.

The protein localises to the cytoplasm. The catalysed reaction is tRNA(Pro) + L-proline + ATP = L-prolyl-tRNA(Pro) + AMP + diphosphate. Its function is as follows. Catalyzes the attachment of proline to tRNA(Pro) in a two-step reaction: proline is first activated by ATP to form Pro-AMP and then transferred to the acceptor end of tRNA(Pro). As ProRS can inadvertently accommodate and process non-cognate amino acids such as alanine and cysteine, to avoid such errors it has two additional distinct editing activities against alanine. One activity is designated as 'pretransfer' editing and involves the tRNA(Pro)-independent hydrolysis of activated Ala-AMP. The other activity is designated 'posttransfer' editing and involves deacylation of mischarged Ala-tRNA(Pro). The misacylated Cys-tRNA(Pro) is not edited by ProRS. The protein is Proline--tRNA ligase of Escherichia coli O7:K1 (strain IAI39 / ExPEC).